The chain runs to 570 residues: Auxin efflux carrier component 6 (570 aa).

At 1–6 the chain is on the extracellular side; sequence MITGNE. The chain crosses the membrane as a helical span at residues 7-27; that stretch reads FYTVMCAMAPLYFAMFVAYGS. Residues 28 to 38 are Cytoplasmic-facing; it reads VKWCKIFTPAQ. Residues 39–59 traverse the membrane as a helical segment; that stretch reads CSGINRFVSVFAVPVLSFHFI. Position 51 (Val-51) interacts with (indol-3-yl)acetate. Residues 60 to 70 lie on the Extracellular side of the membrane; sequence SQNNPYKMDTM. Residues 71 to 91 form a helical membrane-spanning segment; the sequence is FILADTLSKIFVFVLLSLWAV. The Cytoplasmic portion of the chain corresponds to 92-100; the sequence is FFKAGGLDW. Residues 101 to 121 traverse the membrane as a helical segment; that stretch reads LITLFSIATLPNTLVMGIPLL. 2 residues coordinate (indol-3-yl)acetate: Asn-112 and Leu-114. Topologically, residues 122-131 are extracellular; that stretch reads QAMYGDYTQT. A helical membrane pass occupies residues 132–152; it reads LMVQLVVLQCIIWYTLLLFLF. Position 145 (Tyr-145) interacts with (indol-3-yl)acetate. Residues 153 to 430 lie on the Cytoplasmic side of the membrane; the sequence is ELRAARLLIR…LSRNPNTYSS (278 aa). Residues Ser-230 and Ser-308 each carry the phosphoserine modification. Residues 431–451 form a helical membrane-spanning segment; the sequence is LLGLVWSLISFKWNIPMPNIV. The Extracellular segment spans residues 452-454; it reads DFS. A helical membrane pass occupies residues 455-475; the sequence is IKIISDAGLGMAMFSLGLFMA. The Cytoplasmic portion of the chain corresponds to 476–491; sequence LQPKMIPCGAKKATMG. The chain crosses the membrane as a helical span at residues 492–512; that stretch reads MLIRFISGPLFMAGASLLVGL. The Extracellular segment spans residues 513–515; the sequence is RGS. Residues 516–536 traverse the membrane as a helical segment; it reads RLHAAIVQAALPQGIVPFVFA. (indol-3-yl)acetate-binding residues include Ile-530 and Val-531. At 537 to 549 the chain is on the cytoplasmic side; sequence REYNLHPDLLSTL. Residues 550–570 form a helical membrane-spanning segment; the sequence is VIFGMIVSLPVTILYYVLLGL.

Belongs to the auxin efflux carrier (TC 2.A.69.1) family. Homodimer. Expressed in the vasculature of the primary root, cotyledons, floral stem, sepals and the main transmitting tract of the reproductive silique. Expressed in embryos, shoot meristem, root tip and lateral root meristems. Expressed in the nectaries and the floral organ boundaries of the anthers. Detected in pollen. Expressed in broad subepidermal domains that narrowed to sites of vein formation. Expressed in veins of mature leaves.

It localises to the endoplasmic reticulum membrane. Component of the intracellular auxin-transport pathway. Regulates auxin transport and auxin homeostasis. Directly involved in the regulation of nectar production. Involved in unfolded protein response (UPR) activation. Involved in the control of vein patterning. Redundantly with PIN8, inhibits the vein-formation-promoting functions of PIN5. PIN5, PIN6, and PIN8 control vein network geometry, but they are expressed in mutually exclusive domains of leaf vascular cells. The protein is Auxin efflux carrier component 6 of Arabidopsis thaliana (Mouse-ear cress).